The chain runs to 345 residues: Neuropeptide receptor 15 (345 aa).

At 1–11 (MSVAVGIPYVC) the chain is on the extracellular side. The chain crosses the membrane as a helical span at residues 12 to 32 (FFIILSVVGIIGNVIVIYAIA). Residues 33-40 (GDRNMRKS) lie on the Cytoplasmic side of the membrane. Residues 41–61 (VMNILLLNLAVADLANLIFTI) form a helical membrane-spanning segment. Topologically, residues 62-90 (PEWIPPVFFGSTDWLFPSFLCPVCRYLEC) are extracellular. Residues C82 and C171 are joined by a disulfide bond. The helical transmembrane segment at 91 to 111 (VFLFASISTQMIVCIERYIAI) threads the bilayer. Topologically, residues 112–125 (VLPMQARQLCSRRN) are cytoplasmic. The helical transmembrane segment at 126-146 (VLITVLVDWIFVACFASPYAV) threads the bilayer. The Extracellular segment spans residues 147–187 (WHSVKTKDRNTNSLRFKLFQLSATCSNTVGKSTWWQGYKLT). Residues 188 to 208 (EFLAFYFVPCFIITVVYTKVA) traverse the membrane as a helical segment. Over 209-246 (KCLWCKDPTLQCETRSCLDNKSSSRSSDALRTRRNVVK) the chain is Cytoplasmic. A helical membrane pass occupies residues 247 to 267 (MLIACVAVYFVCYSPIQVIFL). At 268–281 (SKAVLNVTIHPPYD) the chain is on the extracellular side. Residues 282–304 (FILLMNALAMTCSASNPLLYTLF) form a helical membrane-spanning segment. Residues 305 to 345 (SQKFRRRLRDVLYCPSDVENETKTYYSINNTSIVGPRASFN) are Cytoplasmic-facing.

It belongs to the G-protein coupled receptor 1 family. In terms of tissue distribution, expressed in pharyngeal muscle and AWC, ASG, ASE, ASI, and ASJ sensory neurons. Expressed in ASI neuron. Expressed in AFD neurons and in AVK interneuron.

Its subcellular location is the cell membrane. Functionally, probable receptor for neuropeptide ligand nlp-8 that plays a role in octopamine signaling and specifically, the octopamine inhibition of aversion responses in olfactory sensory neurons. Plays a crucial role in daf-7 expression. Acts in concert with gpa-4 to activate TGF-beta-like daf-7 secretion in the ASI neuron, thereby promoting larval development and inhibition of dauer diapause. Suppresses immune response against pathogenic infection by inhibiting transcription regulators elt-2 and hlh-30 in ASJ neuron. Promotes pathogen avoidance behavior via intestinal gon-2, independent of aerotaxis. This chain is Neuropeptide receptor 15 (npr-15), found in Caenorhabditis elegans.